The following is a 259-amino-acid chain: Hydroxyacylglutathione hydrolase (259 aa).

Zn(2+) contacts are provided by histidine 56, histidine 58, aspartate 60, histidine 61, histidine 112, aspartate 133, and histidine 171.

The protein belongs to the metallo-beta-lactamase superfamily. Glyoxalase II family. Monomer. Zn(2+) is required as a cofactor.

The enzyme catalyses an S-(2-hydroxyacyl)glutathione + H2O = a 2-hydroxy carboxylate + glutathione + H(+). It participates in secondary metabolite metabolism; methylglyoxal degradation; (R)-lactate from methylglyoxal: step 2/2. Thiolesterase that catalyzes the hydrolysis of S-D-lactoyl-glutathione to form glutathione and D-lactic acid. The chain is Hydroxyacylglutathione hydrolase from Pseudomonas putida (strain ATCC 47054 / DSM 6125 / CFBP 8728 / NCIMB 11950 / KT2440).